The following is a 1609-amino-acid chain: Transmembrane protein 131-like (1609 aa).

Residues 1-40 (MAGLRRPQPGCYCRTAAAVNLLLGVFQVLLPCCRPGGAQG) form the signal peptide. Residues 41–869 (QAIEPLPNVV…VVPGPSWEES (829 aa)) lie on the Extracellular side of the membrane. Residues asparagine 343, asparagine 439, asparagine 522, asparagine 593, asparagine 709, and asparagine 846 are each glycosylated (N-linked (GlcNAc...) asparagine). Residues 696–916 (DYGKVTSLIL…QNASSSSQQN (221 aa)) form a required for Wnt-signaling inhibition and LRP6 degradation region. The helical transmembrane segment at 870 to 890 (FWRLTVFFVSLSLLGVILIAF) threads the bilayer. Residues 891–1609 (QQAQYILMEF…SRDSSYCGNV (719 aa)) lie on the Cytoplasmic side of the membrane. Disordered stretches follow at residues 946–974 (RGKN…YGHS), 991–1014 (TAAA…SSLP), 1108–1144 (KTSK…NQQV), 1159–1178 (VDTK…EDMF), and 1304–1340 (SSSD…PMVD). A compositionally biased stretch (polar residues) spans 952–961 (PVNTPQSRIQ). Residues 991-1000 (TAAASSTSTT) are compositionally biased toward low complexity. The residue at position 1122 (serine 1122) is a Phosphoserine. The span at 1304–1331 (SSSDCGSSSGSVRASRGSWGSWSSTSSS) shows a compositional bias: low complexity.

It belongs to the TMEM131 family. In terms of tissue distribution, expressed in thymocytes.

It is found in the cell membrane. It localises to the cytoplasm. The protein resides in the endoplasmic reticulum. Membrane-associated form that antagonizes canonical Wnt signaling by triggering lysosome-dependent degradation of Wnt-activated LRP6. Regulates thymocyte proliferation. In Homo sapiens (Human), this protein is Transmembrane protein 131-like.